The primary structure comprises 943 residues: MTDYKATLNLPETAFPMKAGLPQREPETLKFWNDIGLYQKLRAIGGDRPKFVLHDGPPYANGSIHIGHAVNKILKDIIVRSKTLAGYDAPYVPGWDCHGLPIEHKVETTHGKNLPADKTRELCREYAAEQIEGQKADFIRLGVLGEWDNPYKTMAFANEANEIRALAEMVRQDFVFKGLKPVNWCFDCGSALAEAEVEYADKTSPTIDVGFPVADADKLAAAFGLAALDKPAQIVIWTTTPWTIPANQALNVHPEIDYALVDAGDRYLVLAEALVEPCLARYQREGKVVATAKGEALELINFRHPFYERLSPVYLADYVALDAGTGIVHSSPAYGEDDFYTCKRYGMSNDDILSPVQSNGVYVDSLPFFGGQFIWKANPNVVAKLEEVGSLLAHETINHSYMHCWRHKTPLIYRATAQWFVGMDKQPGQGASLRERALEAITQTEFIPGWGQARLHGMIAGRPDWCISRQRNWGVPIPFFLHKASGELHPRTVELMEEVAQRVEKEGIEAWFRLDAAELLGDEAAQYDKISDTLDVWFDSGTTHWHVLRGSHRIGHASGPVADLYLEGSDQHRGWFHSSLLTGCAIDNHAPYRQLLTHGFTVDESGRKMSKSLGNTVVPQTVIDTLGADILRLWVASTDYSGEIAVSQQILQRSADAYRRIRNTTRFLLSNLNGFDPAKDLLPPEEMLALDRWAVDRALLLQREIEEAYREYRFWNVYSKVHNFCVQELGGFYLDIIKDRQYTTGANSVARRSCQTALFHIAEALVRWIAPILAFTAEEVWKFLPGERVESVMLATWYDGLGELPADAALNREYWEQVMAVKAAVNKELENQRAAKAVGGNLQAEVTLYAEDALQASLARLGNELRFVLITSTATLAPLASAPADAVDSEVAGLKLKVVKSAHAKCGRCWHHREDVGQHAAHPELCGRCIENIEGSGEVRHYA.

A 'HIGH' region motif is present at residues 58–68 (PYANGSIHIGH). Residue Glu-567 participates in L-isoleucyl-5'-AMP binding. Residues 608-612 (KMSKS) carry the 'KMSKS' region motif. Lys-611 is an ATP binding site. Zn(2+) is bound by residues Cys-906, Cys-909, Cys-926, and Cys-929.

Belongs to the class-I aminoacyl-tRNA synthetase family. IleS type 1 subfamily. In terms of assembly, monomer. Zn(2+) is required as a cofactor.

It localises to the cytoplasm. It carries out the reaction tRNA(Ile) + L-isoleucine + ATP = L-isoleucyl-tRNA(Ile) + AMP + diphosphate. Catalyzes the attachment of isoleucine to tRNA(Ile). As IleRS can inadvertently accommodate and process structurally similar amino acids such as valine, to avoid such errors it has two additional distinct tRNA(Ile)-dependent editing activities. One activity is designated as 'pretransfer' editing and involves the hydrolysis of activated Val-AMP. The other activity is designated 'posttransfer' editing and involves deacylation of mischarged Val-tRNA(Ile). The chain is Isoleucine--tRNA ligase from Pseudomonas paraeruginosa (strain DSM 24068 / PA7) (Pseudomonas aeruginosa (strain PA7)).